Consider the following 532-residue polypeptide: Putative cysteine desulfurase PbSufS (532 aa).

The N-terminal stretch at methionine 1–serine 18 is a signal peptide. N6-(pyridoxal phosphate)lysine is present on lysine 286. The active-site Cysteine persulfide intermediate is the cysteine 480.

This sequence belongs to the class-V pyridoxal-phosphate-dependent aminotransferase family. Csd subfamily. Monomer. Interacts with SufE; interaction enhances cysteine desulfurase activity of SufS. It depends on pyridoxal 5'-phosphate as a cofactor.

The protein resides in the plastid. It is found in the apicoplast. It catalyses the reaction (sulfur carrier)-H + L-cysteine = (sulfur carrier)-SH + L-alanine. It participates in cofactor biosynthesis; iron-sulfur cluster biosynthesis. Its function is as follows. Catalyzes sulfur activation and mobilization in sulfur mobilization (SUF) pathway for iron-sulfur (Fe-S) cluster biogenesis. Active when in complex with a partner protein SufE. Required for apicoplast maintenance. Plays a role in the development of sporozoites in oocysts in mosquitoes. This Plasmodium berghei (strain Anka) protein is Putative cysteine desulfurase PbSufS.